The primary structure comprises 185 residues: Shikimate kinase (185 aa).

Residue 12-17 (GSGKTT) participates in ATP binding. Thr-16 is a binding site for Mg(2+). 3 residues coordinate substrate: Asp-34, Arg-58, and Gly-79. Arg-116 is a binding site for ATP. Residue Arg-135 participates in substrate binding.

It belongs to the shikimate kinase family. Monomer. The cofactor is Mg(2+).

The protein resides in the cytoplasm. It carries out the reaction shikimate + ATP = 3-phosphoshikimate + ADP + H(+). It participates in metabolic intermediate biosynthesis; chorismate biosynthesis; chorismate from D-erythrose 4-phosphate and phosphoenolpyruvate: step 5/7. In terms of biological role, catalyzes the specific phosphorylation of the 3-hydroxyl group of shikimic acid using ATP as a cosubstrate. The protein is Shikimate kinase of Corynebacterium jeikeium (strain K411).